The chain runs to 535 residues: Probable galacturonosyltransferase 12 (535 aa).

At 1–37 the chain is on the cytoplasmic side; it reads MQLHISPSLRHVTVVTGKGLREFIKVKVGSRRFSYQM. Residues 38–58 traverse the membrane as a helical; Signal-anchor for type II membrane protein segment; that stretch reads VFYSLLFFTFLLRFVFVLSTV. The Lumenal portion of the chain corresponds to 59–535; it reads DTIDGDPSPC…FIKSCHIRAS (477 aa). N-linked (GlcNAc...) asparagine glycans are attached at residues Asn397 and Asn430.

This sequence belongs to the glycosyltransferase 8 family. Highly expressed in stems. Detected in roots, inflorescences, siliques, and leaves. Expressed in cells undergoing secondary wall thickening, including interfascicular fibers and primary and secondary xylem.

The protein resides in the golgi apparatus membrane. It functions in the pathway glycan metabolism; pectin biosynthesis. Its function is as follows. Involved in pectin assembly and/or distribution, and in the synthesis of secondary wall glucuronoxylan. Probably involved in the synthesis of the glycosyl sequence at the glucuronoxylan reducing end. May be involved in synthesis of a complex glycan primer for xylan synthesis. The polypeptide is Probable galacturonosyltransferase 12 (GAUT12) (Arabidopsis thaliana (Mouse-ear cress)).